Consider the following 335-residue polypeptide: MPLSVFAEEFAEKSVKRYIGQGLWLPCNLSDYYYYQEFHDEGGYGSIHRVMDKATGNEVIMKHSYKLDFSPGILPEWWSKFGSLTDDLRERVVSNHQLRVSREAQILVQASTVLPEMKLHDYFDDGESFILIMDYGGRSLENIASSHKKKITNLVRYRAYKGNWFYKNWLKQVVDYMIKIYHKIKILYDIGIYHNDLKPENVLVDGDHITIIDFGVADFVPDENERKTWSCYDFRGTIDYIPPEVGTTGSFDPWHQTVWCFGVMLYFLSFMEYPFHIDNQFLEYALEGEKLDKLPEPFAQLIRECLSVDPDKRPLTSLLDRLTELHHHLQTIDVW.

Positions 33-329 (YYYQEFHDEG…DRLTELHHHL (297 aa)) constitute a Protein kinase domain. ATP-binding positions include 39–47 (HDEGGYGSI) and Lys62. Asp196 functions as the Proton acceptor in the catalytic mechanism.

This sequence belongs to the protein kinase superfamily. Ser/Thr protein kinase family.

The protein is Putative serine/threonine-protein kinase 040L of Invertebrate iridescent virus 3 (IIV-3).